We begin with the raw amino-acid sequence, 135 residues long: Class I hydrophobin 15 (135 aa).

An N-terminal signal peptide occupies residues M1–A21. 4 disulfide bridges follow: C50/C113, C57/C107, C58/C97, and C114/C127. An N-linked (GlcNAc...) asparagine glycan is attached at N131.

Belongs to the fungal hydrophobin family. Self-assembles to form functional amyloid fibrils called rodlets. Self-assembly into fibrillar rodlets occurs spontaneously at hydrophobic:hydrophilic interfaces and the rodlets further associate laterally to form amphipathic monolayers.

Its subcellular location is the secreted. It is found in the cell wall. In terms of biological role, aerial growth, conidiation, and dispersal of filamentous fungi in the environment rely upon a capability of their secreting small amphipathic proteins called hydrophobins (HPBs) with low sequence identity. Class I can self-assemble into an outermost layer of rodlet bundles on aerial cell surfaces, conferring cellular hydrophobicity that supports fungal growth, development and dispersal; whereas Class II form highly ordered films at water-air interfaces through intermolecular interactions but contribute nothing to the rodlet structure. In Pleurotus ostreatus (strain PC15) (Oyster mushroom), this protein is Class I hydrophobin 15.